Reading from the N-terminus, the 74-residue chain is VLIIAVLFLTACQLTTAVTSSRGEQKHRALRSTDKKFKVALLCSPPGSYCFGPAACCSNFCSTLSDVCQESWSG.

Residues 1-17 form the signal peptide; it reads VLIIAVLFLTACQLTTA. The propeptide occupies 18–38; it reads VTSSRGEQKHRALRSTDKKFK. 3 disulfides stabilise this stretch: Cys43/Cys57, Cys50/Cys61, and Cys56/Cys68. Position 73 is a serine amide (Ser73).

Belongs to the conotoxin O1 superfamily. Expressed by the venom duct.

Its subcellular location is the secreted. The polypeptide is Conotoxin AbVIA (Conus abbreviatus (Abbreviated cone)).